The chain runs to 674 residues: Dystrophia myotonica WD repeat-containing protein (674 aa).

At alanine 2 the chain carries N-acetylalanine. Disordered regions lie at residues 31–92 and 103–122; these read GFYK…PALP and EPDS…LGSG. Residues 53–65 are compositionally biased toward pro residues; the sequence is PVPPQPPQPPPGP. Residues 66 to 77 are compositionally biased toward low complexity; it reads ASASGPGAAGPA. A compositionally biased stretch (pro residues) spans 78–90; that stretch reads SSPPPAGPGPGPA. The segment covering 107-118 has biased composition (low complexity); the sequence is AGAGEPPATPAG. WD repeat units lie at residues 211–251, 282–321, 324–363, 366–409, and 413–453; these read IDKT…ASAP, VGEG…LRGL, SYFG…VVAR, GHKS…EAAG, and AGGA…LYPH. 4 disordered regions span residues 384–419, 456–516, 532–573, and 637–674; these read EEAA…APLS, LART…EPGT, RDRG…RSRL, and DEET…GTVV. 2 stretches are compositionally biased toward low complexity: residues 457–478 and 487–499; these read ARTR…SSRG and PRSL…LPHP. Serine 495 carries the post-translational modification Phosphoserine. 2 stretches are compositionally biased toward gly residues: residues 500–509 and 550–563; these read AGGGKAGGPG and SRGG…GGEK. Residue arginine 551 is modified to Omega-N-methylarginine. One copy of the WD 6 repeat lies at 601 to 638; the sequence is IAQERLTVLLFLEDCIITACQEGLICTWARPGKAFTDE. Over residues 642–674 the composition is skewed to polar residues; that stretch reads AQTGEGSWPRSPSKSVVEGISSQPGNSPSGTVV.

In terms of assembly, component of the USP12/DMWD/WDR48 deubiquitinating complex. Interacts with USP12; promotes its enzymatic activity. Interacts with USP46.

It localises to the cytoplasm. The protein localises to the nucleus. It is found in the perikaryon. Its subcellular location is the cell projection. The protein resides in the dendrite. Functionally, regulator of the deubiquitinating USP12/DMWD/WDR48 complex. Functions as a cofactor that promotes USP12 enzymatic activity. The polypeptide is Dystrophia myotonica WD repeat-containing protein (Homo sapiens (Human)).